The primary structure comprises 233 residues: 2,3,4,5-tetrahydropyridine-2,6-dicarboxylate N-acetyltransferase (233 aa).

It belongs to the transferase hexapeptide repeat family. DapH subfamily.

It catalyses the reaction (S)-2,3,4,5-tetrahydrodipicolinate + acetyl-CoA + H2O = L-2-acetamido-6-oxoheptanedioate + CoA. Its pathway is amino-acid biosynthesis; L-lysine biosynthesis via DAP pathway; LL-2,6-diaminopimelate from (S)-tetrahydrodipicolinate (acetylase route): step 1/3. Its function is as follows. Catalyzes the transfer of an acetyl group from acetyl-CoA to tetrahydrodipicolinate. The chain is 2,3,4,5-tetrahydropyridine-2,6-dicarboxylate N-acetyltransferase from Thermosipho africanus (strain TCF52B).